Here is a 377-residue protein sequence, read N- to C-terminus: Leucine aminopeptidase A (377 aa).

The N-terminal stretch at 1-18 (MRFLPCIATLAATASALA) is a signal peptide. A propeptide spanning residues 19–79 (IGDHVRSDDQ…SNKKQKLAVT (61 aa)) is cleaved from the precursor. Asn-87 is a glycosylation site (N-linked (GlcNAc...) asparagine). The Zn(2+) site is built by His-176, Asp-195, Glu-234, and Asp-261. An N-linked (GlcNAc...) asparagine glycan is attached at Asn-288. The cysteines at positions 310 and 314 are disulfide-linked. A Zn(2+)-binding site is contributed by His-343.

Belongs to the peptidase M28 family. M28E subfamily. In terms of assembly, monomer. The cofactor is Zn(2+).

It localises to the secreted. With respect to regulation, calcium, magnesium and manganese cations reduce peptidase activity to 20.3-51.3 percent. The metal ion chelating reagent EDTA almost completely inhibits activity. The protease inhibitor bacitracin and the aminopeptidase B inhibitor bestatin, as well as DTT and beta-mercaptoethanol act also as lap A inhibitorsD. Functionally, extracellular aminopeptidase that allows assimilation of proteinaceous substrates. This Aspergillus oryzae (strain ATCC 42149 / RIB 40) (Yellow koji mold) protein is Leucine aminopeptidase A (lapA).